Reading from the N-terminus, the 944-residue chain is Calcium-transporting ATPase type 2C member 2 (944 aa).

Over 1–104 (MGRRFKFLQK…DNTEPVWKKY (104 aa)) the chain is Cytoplasmic. The segment at 69–93 (VDLDSGLSEFAVAQRRLVHGWNEFV) is interaction with ORAI1. Residues 105-125 (LDQFRNPLILLLLGSSVVSVL) form a helical membrane-spanning segment. Residues 126–127 (TK) lie on the Extracellular side of the membrane. Residues 128-148 (EYEDAISIALAVLIVVTVGFI) traverse the membrane as a helical segment. Topologically, residues 149-229 (QEYRSEKSLE…EVEPCSKTDS (81 aa)) are cytoplasmic. A helical transmembrane segment spans residues 230–250 (PLAGGGDLSTLSNVVFMGTLV). Residues 251-291 (QCGKGQGVVIGTGEQSQFGEVFKMMRAEETPKTPLQKSMDK) are Extracellular-facing. Threonine 262 bears the Phosphothreonine mark. Serine 266 carries the post-translational modification Phosphoserine. Residues 292–312 (LGKQLTVFSFGIIGLLMLVGW) form a helical membrane-spanning segment. Residues 313 to 329 (VQGKPLLSMFTIGVSLA) are Cytoplasmic-facing. 4 residues coordinate Ca(2+): valine 330, alanine 331, isoleucine 333, and glutamate 335. Residues 330 to 350 (VAAIPEGLPIVVMVTLVLGVL) traverse the membrane as a helical segment. At 351-748 (RMAKKRVIVK…IAALSLITLS (398 aa)) the chain is on the extracellular side. Catalysis depends on aspartate 377, which acts as the 4-aspartylphosphate intermediate. Mg(2+) is bound by residues aspartate 672 and aspartate 676. Residues 749-769 (TVCNLPNPLNAMQILWVNIIM) traverse the membrane as a helical segment. The Ca(2+) site is built by asparagine 766 and aspartate 770. Residues 770–802 (DGPPAQSLGVEPVDRDALKRPPRSVKDTILNRA) lie on the Cytoplasmic side of the membrane. The helical transmembrane segment at 803-823 (LILKILMSAAVILGGTLFIFW) threads the bilayer. The Extracellular portion of the chain corresponds to 824 to 835 (REIPENRTSTPR). A helical membrane pass occupies residues 836–853 (TTTMAFTCFVFFDLFNAL). Residues 854-872 (SCRSQTKLIFEIGFFRNRM) are Cytoplasmic-facing. A helical membrane pass occupies residues 873–893 (FLYSILGSLLGQLAVIYAPPL). Topologically, residues 894 to 903 (QKVFQTENLS) are extracellular. Residues 904 to 924 (ALDLLLLTGLASSVFILSELL) traverse the membrane as a helical segment. Over 925–944 (KLCEKFCSRAKADQMLPEAV) the chain is Cytoplasmic.

This sequence belongs to the cation transport ATPase (P-type) (TC 3.A.3) family. Type IIA subfamily. As to quaternary structure, interacts (via N-terminus) with ORAI1 (via N- and C-termini); this interaction regulates Ca(2+) influx at the plasma membrane.

It is found in the golgi apparatus. The protein localises to the trans-Golgi network membrane. Its subcellular location is the cell membrane. The protein resides in the basolateral cell membrane. It carries out the reaction Ca(2+)(in) + ATP + H2O = Ca(2+)(out) + ADP + phosphate + H(+). The catalysed reaction is Mn(2+)(in) + ATP + H2O = Mn(2+)(out) + ADP + phosphate + H(+). Functionally, ATP-driven pump that supplies the Golgi apparatus with Ca(2+) and Mn(2+) ions, both essential cofactors for processing and trafficking of newly synthesized proteins in the secretory pathway. Within a catalytic cycle, acquires Ca(2+) or Mn(2+) ions on the cytoplasmic side of the membrane and delivers them to the lumenal side. The transfer of ions across the membrane is coupled to ATP hydrolysis and is associated with a transient phosphorylation that shifts the pump conformation from inward-facing to outward-facing state. Induces Ca(2+) influx independently of its ATP-driven pump function. At the basolateral membrane of mammary epithelial cells, interacts with Ca(2+) channel ORAI1 and mediates Ca(2+) entry independently of the Ca(2+) content of endoplasmic reticulum or Golgi stores. May facilitate transepithelial transport of large quantities of Ca(2+) for milk secretion via activation of Ca(2+) influx channels at the plasma membrane and active Ca(2+) transport at the Golgi apparatus. This Rattus norvegicus (Rat) protein is Calcium-transporting ATPase type 2C member 2 (Atp2c2).